The primary structure comprises 194 residues: Fe/S biogenesis protein NfuA (194 aa).

[4Fe-4S] cluster-binding residues include Cys-151 and Cys-154.

It belongs to the NfuA family. In terms of assembly, homodimer. It depends on [4Fe-4S] cluster as a cofactor.

Functionally, involved in iron-sulfur cluster biogenesis. Binds a 4Fe-4S cluster, can transfer this cluster to apoproteins, and thereby intervenes in the maturation of Fe/S proteins. Could also act as a scaffold/chaperone for damaged Fe/S proteins. This is Fe/S biogenesis protein NfuA from Actinobacillus succinogenes (strain ATCC 55618 / DSM 22257 / CCUG 43843 / 130Z).